The sequence spans 206 residues: Ribosomal RNA large subunit methyltransferase E (206 aa).

5 residues coordinate S-adenosyl-L-methionine: glycine 60, tryptophan 62, aspartate 80, asparagine 96, and aspartate 121. The active-site Proton acceptor is lysine 161.

Belongs to the class I-like SAM-binding methyltransferase superfamily. RNA methyltransferase RlmE family.

The protein localises to the cytoplasm. The catalysed reaction is uridine(2552) in 23S rRNA + S-adenosyl-L-methionine = 2'-O-methyluridine(2552) in 23S rRNA + S-adenosyl-L-homocysteine + H(+). Its function is as follows. Specifically methylates the uridine in position 2552 of 23S rRNA at the 2'-O position of the ribose in the fully assembled 50S ribosomal subunit. This chain is Ribosomal RNA large subunit methyltransferase E, found in Francisella philomiragia subsp. philomiragia (strain ATCC 25017 / CCUG 19701 / FSC 153 / O#319-036).